The sequence spans 287 residues: MHLQGTNTYLVGTGKSRILIDTAQKNCKLANQYQKGLPVWINRISSFLYTHKIELSYVLLTHWHGDHTGGVPDLISRNSSLADKIYKNRPDSGQNPITHGQIFSVDGATVRAIFTPGHSVDHMCFLLEEENALFTGDNVLGHGFSVAQDLGRYMDSLRDMASLGCRIGYPAHGAVIEYLPGKLEEYIQHREGRERMMLSALTRQRVRGEGVREEGVKCGLTLNEIVMAIYGKLPPEVIEKALAPSLLQVLWKLTEDRMVGFKPGDPLKRQWFALEQRKRNKVRGCPS.

Residues His62, His64, Asp66, and His67 each coordinate Zn(2+). Asp66 (proton donor/acceptor) is an active-site residue.

This sequence belongs to the metallo-beta-lactamase superfamily. Zn(2+) serves as cofactor.

Its pathway is secondary metabolite biosynthesis. Functionally, lactamase-like protein; part of the gene cluster that mediates the biosynthesis of neosartoricin B, a prenylated anthracenone that probably exhibits T-cell antiproliferative activity, suggestive of a physiological role as an immunosuppressive agent. The non-reducing polyketide synthase nscA probably synthesizes and cyclizes the decaketide backbone. The hydrolase nscB then mediates the product release through hydrolysis followed by spontaneous decarboxylation. The prenyltransferase nscD catalyzes the addition of the dimethylallyl group to the aromatic C5. The FAD-dependent monooxygenase nscC is then responsible for the stereospecific hydroxylation at C2. Neosartoricin B can be converted into two additional compounds neosartoricins C and D. Neosartoricin C is a spirocyclic compound that is cyclized through the attack of C3 hydroxyl on C14, followed by dehydration. On the other hand, neosartoricin D is a further cyclized compound in which attack of C2 on C14 in neosartoricin C results in the formation of the acetal-containing dioxabicyclo-octanone ring. Both of these compounds are novel and possibly represent related metabolites of the gene cluster. The protein is Lactamase-like protein nscB of Trichophyton verrucosum (strain HKI 0517).